Consider the following 354-residue polypeptide: Ferrochelatase (354 aa).

Fe cation is bound by residues His-214 and Glu-295.

This sequence belongs to the ferrochelatase family.

The protein localises to the cytoplasm. It carries out the reaction heme b + 2 H(+) = protoporphyrin IX + Fe(2+). The protein operates within porphyrin-containing compound metabolism; protoheme biosynthesis; protoheme from protoporphyrin-IX: step 1/1. Catalyzes the ferrous insertion into protoporphyrin IX. The sequence is that of Ferrochelatase from Burkholderia orbicola (strain AU 1054).